Consider the following 543-residue polypeptide: ADIPOR-like receptor IZH3 (543 aa).

Over 1–259 (MMDSSSKSLT…NWYGWHNETS (259 aa)) the chain is Lumenal. N-linked (GlcNAc...) asparagine glycosylation is found at N45, N123, N153, and N256. A helical membrane pass occupies residues 260–280 (NIWSHLLGAIYIIYLAIYDFP). The Cytoplasmic segment spans residues 281-295 (QSEVWRNSQVPPQAR). The helical transmembrane segment at 296 to 316 (WIVFMFLAAALKCMLSSVFWH) threads the bilayer. Over 317-330 (TFNGTSFLKLRSKF) the chain is Lumenal. An N-linked (GlcNAc...) asparagine glycan is attached at N319. The helical transmembrane segment at 331–353 (ACVDYSGITILITASILTTEFVT) threads the bilayer. Residues 354-357 (MYSC) lie on the Cytoplasmic side of the membrane. A helical membrane pass occupies residues 358 to 378 (YWAMYTYMSISLALGVFGVFM). Residues 379 to 395 (NWSPRFDRPEARPLRIR) are Lumenal-facing. Residues 396–416 (FFILLATMGVLSFLHLIFLTD) traverse the membrane as a helical segment. At 417-425 (LHYAATLFS) the chain is on the cytoplasmic side. Residues 426 to 446 (PVTYKSVVWYLVGVVFYGSFI) traverse the membrane as a helical segment. Residues 447-505 (PERFRSDVQVDKTIPTNYELSTDLEIITKQREIHFREVPTAHSKCSSCPSHAKSFKSLW) are Lumenal-facing. A helical transmembrane segment spans residues 506 to 526 (WVDYFGCSHTFWHFFVVLGVI). Residues 527–543 (GHYRAILDMFAKRWILS) lie on the Cytoplasmic side of the membrane.

Belongs to the ADIPOR family.

It is found in the endoplasmic reticulum membrane. Its function is as follows. ADIPOR-like receptor involved in zinc metabolism either by altering membrane sterol content or by directly altering cellular zinc levels. This is ADIPOR-like receptor IZH3 (IZH3) from Saccharomyces cerevisiae (strain ATCC 204508 / S288c) (Baker's yeast).